A 91-amino-acid polypeptide reads, in one-letter code: Small ribosomal subunit protein uS19 (91 aa).

The protein belongs to the universal ribosomal protein uS19 family.

Its function is as follows. Protein S19 forms a complex with S13 that binds strongly to the 16S ribosomal RNA. The polypeptide is Small ribosomal subunit protein uS19 (Bordetella pertussis (strain Tohama I / ATCC BAA-589 / NCTC 13251)).